A 1042-amino-acid chain; its full sequence is Serine/threonine-protein kinase LATS2 (1042 aa).

The disordered stretch occupies residues arginine 23 to aspartate 44. Positions serine 30–aspartate 44 are enriched in polar residues. Serine 82 carries the phosphoserine; by AURKA modification. Residues glutamate 97 to methionine 138 form the UBA domain. The segment at arginine 100 to tyrosine 140 is interaction with ubiquitinated AMOTL2. Residues histidine 237–proline 282 form a disordered region. Residues glutamine 258–threonine 267 show a composition bias toward polar residues. Phosphothreonine is present on threonine 267. Serine 362 is subject to Phosphoserine. Disordered regions lie at residues arginine 378 to proline 399, proline 442 to leucine 481, and glutamine 501 to serine 550. The PPxY motif motif lies at proline 472–tyrosine 475. The span at threonine 507–glutamine 530 shows a compositional bias: basic and acidic residues. Serine 534 is modified (phosphoserine). The segment covering asparagine 541 to serine 550 has biased composition (basic and acidic residues). The Protein kinase domain maps to phenylalanine 626–phenylalanine 931. Residues leucine 632–valine 640 and lysine 655 contribute to the ATP site. The active-site Proton acceptor is aspartate 749. One can recognise an AGC-kinase C-terminal domain in the interval asparagine 932–proline 1010. Threonine 999 is modified (phosphothreonine). The segment at proline 1014 to valine 1042 is disordered.

This sequence belongs to the protein kinase superfamily. AGC Ser/Thr protein kinase family. In terms of assembly, interacts with and is phosphorylated by AURKA. Binds to AR. Interacts with AJUBA during mitosis and this complex regulates organization of the spindle apparatus through recruitment of gamma-tubulin to the centrosome. Interacts (via PPxY motif) with YAP1 (via WW domains). Interacts with MOB1A and MOB1B. Interacts with LIMD1, WTIP and AJUBA. Interacts with SNAI1. Interacts with WWC1, WWC2 and WWC3 (via their WW domains). Interacts (via UBA domain) with ubiquitinated AMOTL2; the interaction promotes LATS2 phosphorylation of YAP1. Mg(2+) is required as a cofactor. Autophosphorylated and phosphorylated during M-phase and the G1/S-phase of the cell cycle. Phosphorylated and activated by STK3/MST2. Phosphorylated by MAP4Ks; in parallel to STK3/MST2 and resulting to its activation. Phosphorylation by NUAK2 may regulate its activity in phosphorylation and inactivation YAP1. As to expression, expressed at high levels in ovary and testis and at lower levels in all other tissues examined.

It is found in the cytoplasm. It localises to the cytoskeleton. Its subcellular location is the microtubule organizing center. The protein localises to the centrosome. The protein resides in the spindle pole. It is found in the nucleus. It carries out the reaction L-seryl-[protein] + ATP = O-phospho-L-seryl-[protein] + ADP + H(+). The catalysed reaction is L-threonyl-[protein] + ATP = O-phospho-L-threonyl-[protein] + ADP + H(+). Its function is as follows. Negative regulator of YAP1 in the Hippo signaling pathway that plays a pivotal role in organ size control and tumor suppression by restricting proliferation and promoting apoptosis. The core of this pathway is composed of a kinase cascade wherein STK3/MST2 and STK4/MST1, in complex with its regulatory protein SAV1, phosphorylates and activates LATS1/2 in complex with its regulatory protein MOB1, which in turn phosphorylates and inactivates YAP1 oncoprotein and WWTR1/TAZ. Phosphorylation of YAP1 by LATS2 inhibits its translocation into the nucleus to regulate cellular genes important for cell proliferation, cell death, and cell migration. Also phosphorylates YAP1 in response to cell contact inhibition-driven WWP1 ubiquitination of AMOTL2, which results in LATS2 activation. Acts as a tumor suppressor which plays a critical role in centrosome duplication, maintenance of mitotic fidelity and genomic stability. Negatively regulates G1/S transition by down-regulating cyclin E/CDK2 kinase activity. Negative regulator of the androgen receptor. Phosphorylates SNAI1 in the nucleus leading to its nuclear retention and stabilization, which enhances its epithelial-mesenchymal transition and tumor cell invasion/migration activities. This tumor-promoting activity is independent of its effects upon YAP1 or WWTR1/TAZ. Acts as an activator of the NLRP3 inflammasome by mediating phosphorylation of 'Ser-265' of NLRP3 following NLRP3 palmitoylation, promoting NLRP3 activation by NEK7. The sequence is that of Serine/threonine-protein kinase LATS2 from Mus musculus (Mouse).